The primary structure comprises 540 residues: CBL-interacting protein kinase 12 (540 aa).

The tract at residues 1 to 23 (MLMATVSPARREPTPQAVRASPM) is disordered. In terms of domain architecture, Protein kinase spans 46–300 (YELGRVLGQG…VPEIIESDWF (255 aa)). Residues 52–60 (LGQGSFAKV) and Lys75 each bind ATP. Asp168 (proton acceptor) is an active-site residue. The activation loop stretch occupies residues 186–215 (DFGLAAGPDQFDPDGLLHTFCGTPAYVAPE). Pro residues predominate over residues 333–348 (PPPLGLAPPVPPPPQG). A disordered region spans residues 333–380 (PPPLGLAPPVPPPPQGDDPDGSGSESDSSVVSCPATLSTGESQRVRGS). The segment covering 353–364 (GSGSESDSSVVS) has biased composition (low complexity). Residues 370–406 (STGESQRVRGSLPRPASLNAFDIISFSKGFNLSGLFE) enclose the NAF domain. The interval 409-438 (GNEIRFVSGEPMSDIVKKLEEIAKVKSFTV) is PPI.

It belongs to the protein kinase superfamily. CAMK Ser/Thr protein kinase family. SNF1 subfamily. It depends on Mg(2+) as a cofactor. Post-translationally, autophosphorylated. Expressed at low levels in leaf blades.

The enzyme catalyses L-seryl-[protein] + ATP = O-phospho-L-seryl-[protein] + ADP + H(+). The catalysed reaction is L-threonyl-[protein] + ATP = O-phospho-L-threonyl-[protein] + ADP + H(+). In terms of biological role, involved in drought stress tolerance. CIPK serine-threonine protein kinases interact with CBL proteins. Binding of a CBL protein to the regulatory NAF domain of CIPK protein lead to the activation of the kinase in a calcium-dependent manner. The sequence is that of CBL-interacting protein kinase 12 (CIPK12) from Oryza sativa subsp. japonica (Rice).